Reading from the N-terminus, the 905-residue chain is DNA gyrase subunit A (905 aa).

A Topo IIA-type catalytic domain is found at 35–524 (IPDVRDGLKP…GEFDQDIEDL (490 aa)). Residue Tyr123 is the O-(5'-phospho-DNA)-tyrosine intermediate of the active site. The GyrA-box motif lies at 551–557 (QKRGGKG). The tract at residues 882-905 (IAESSDDNEEDSEFEEEVAEEGSE) is disordered. Acidic residues predominate over residues 885 to 905 (SSDDNEEDSEFEEEVAEEGSE).

It belongs to the type II topoisomerase GyrA/ParC subunit family. Heterotetramer, composed of two GyrA and two GyrB chains. In the heterotetramer, GyrA contains the active site tyrosine that forms a transient covalent intermediate with DNA, while GyrB binds cofactors and catalyzes ATP hydrolysis.

It is found in the cytoplasm. The enzyme catalyses ATP-dependent breakage, passage and rejoining of double-stranded DNA.. Its function is as follows. A type II topoisomerase that negatively supercoils closed circular double-stranded (ds) DNA in an ATP-dependent manner to modulate DNA topology and maintain chromosomes in an underwound state. Negative supercoiling favors strand separation, and DNA replication, transcription, recombination and repair, all of which involve strand separation. Also able to catalyze the interconversion of other topological isomers of dsDNA rings, including catenanes and knotted rings. Type II topoisomerases break and join 2 DNA strands simultaneously in an ATP-dependent manner. The protein is DNA gyrase subunit A of Rickettsia bellii (strain RML369-C).